Here is a 62-residue protein sequence, read N- to C-terminus: MGKQCYVTGRKASTGNNRSHALNANKRRFNANLQKVRILVDGKPKKVWVSARALKSGKVTRV.

The protein belongs to the bacterial ribosomal protein bL28 family.

The protein is Large ribosomal subunit protein bL28 of Staphylococcus haemolyticus (strain JCSC1435).